A 341-amino-acid chain; its full sequence is GTPase Obg (341 aa).

Residues 1–159 (MKFVDEALIK…RNLRLELRVL (159 aa)) enclose the Obg domain. The segment at 128–150 (TRYKSSVNRSPRQTTPGSPGESR) is disordered. Polar residues predominate over residues 129–144 (RYKSSVNRSPRQTTPG). The OBG-type G domain occupies 160–334 (ADVGLLGLPN…LCYALMQLID (175 aa)). GTP-binding positions include 166–173 (GLPNAGKS), 191–195 (FTTLH), 213–216 (DIPG), 283–286 (NKID), and 315–317 (SAI). Positions 173 and 193 each coordinate Mg(2+).

It belongs to the TRAFAC class OBG-HflX-like GTPase superfamily. OBG GTPase family. Monomer. Mg(2+) is required as a cofactor.

It localises to the cytoplasm. Functionally, an essential GTPase which binds GTP, GDP and possibly (p)ppGpp with moderate affinity, with high nucleotide exchange rates and a fairly low GTP hydrolysis rate. Plays a role in control of the cell cycle, stress response, ribosome biogenesis and in those bacteria that undergo differentiation, in morphogenesis control. This is GTPase Obg from Legionella pneumophila subsp. pneumophila (strain Philadelphia 1 / ATCC 33152 / DSM 7513).